The primary structure comprises 197 residues: Small ribosomal subunit protein uS4B (197 aa).

One can recognise an S4 RNA-binding domain in the interval 88–150 (SRLDNMVYRM…SRKTEMFVNN (63 aa)).

This sequence belongs to the universal ribosomal protein uS4 family. In terms of assembly, part of the 30S ribosomal subunit. Contacts protein S5. The interaction surface between S4 and S5 is involved in control of translational fidelity.

One of the primary rRNA binding proteins, it binds directly to 16S rRNA where it nucleates assembly of the body of the 30S subunit. Its function is as follows. With S5 and S12 plays an important role in translational accuracy. This Clostridium perfringens (strain SM101 / Type A) protein is Small ribosomal subunit protein uS4B.